A 448-amino-acid polypeptide reads, in one-letter code: GTPase Der (448 aa).

2 EngA-type G domains span residues 3-167 (PVIA…EPPE) and 182-355 (TRLA…ASAT). Residues 9 to 16 (GRPNVGKS), 56 to 60 (DTGGF), 119 to 122 (NKAE), 188 to 195 (GRPNVGKS), 235 to 239 (DTAGL), and 300 to 303 (NKWD) each bind GTP. The KH-like domain maps to 356-440 (RKLPTPQLTR…PMRIELRASH (85 aa)).

Belongs to the TRAFAC class TrmE-Era-EngA-EngB-Septin-like GTPase superfamily. EngA (Der) GTPase family. In terms of assembly, associates with the 50S ribosomal subunit.

In terms of biological role, GTPase that plays an essential role in the late steps of ribosome biogenesis. The chain is GTPase Der from Leptothrix cholodnii (strain ATCC 51168 / LMG 8142 / SP-6) (Leptothrix discophora (strain SP-6)).